Reading from the N-terminus, the 262-residue chain is Small ribosomal subunit protein eS4y (262 aa).

The S4 RNA-binding domain maps to 42-104; the sequence is LPLVLIIRNR…TNENFRLLYD (63 aa).

The protein belongs to the eukaryotic ribosomal protein eS4 family.

Its subcellular location is the cytoplasm. This is Small ribosomal subunit protein eS4y (RPS4B) from Arabidopsis thaliana (Mouse-ear cress).